The primary structure comprises 841 residues: MANANGKAATSLPEKISAKANPEADDATEIAGNIVYHAKYSPHFSPLKFGPEQALYATAESLRDRLIQLWNETYVHFNKVDPKQTYYLSMEYLQGRALTNAIGNLNLQGPYADALRTLGYELEEIAEQEKDAALGNGGLGRLASCFLDSMATLNLPAWGYGLRYRHGLFKQIITKKGQEEIPEDWLEKFSPWEIVRHDVVFPVRFFGKVQVNPDGSRKWVDGDVVQALAYDVPIPGYGTKNTISLRLWEAKARAEDLDLFQFNEGEYELAAQLHSRAQQICTVLYPGDATENGKLLRLKQQFFLCSASLQDIISRFHERSTTEGSRKWSEFPSKVAVQMNDTHPTLAIPELMRLLMDDNGLGWDEAWDVTSKTVAYTNHTVLPEALEKWSQSLMWKLLPRHMEIIEEIDKRFVQTIRDTRVDLEDKISSLSILDNNPQKPVVRMANLCVVSSHTVNGVAQLHSDILKAELFADYVSIWPNKFQNKTNGITPRRWLRFCSPELSDIITKWLKTDKWITDLDLLTGLRQFADNEELQSEWASAKTANKKRLAQYIERVTGVSIDPTSLFDIQVKRIHEYKRQLMNILGVVYRFKKLKEMKPEERKKTVPRTVMIGGKAFATYTNAKRIVKLVNDVGDVVNSDPEVNEYLKVVFVPNYNVTVAEMLIPGSELSQHISTAGMEASGTSNMKFALNGCLIIGTLDGANVEIREEVGEENFFLFGATADQVPRLRKEREDGLFKPDPRFEEAKQFVKSGVFGSYDYGPLLDSLEGNTGFGRGDYFLVGYDFPSYMDAQAKVDEAYKDRKGWLKMSILSTAGSGKFSSDRTIAQYAKEIWNIEACPVP.

Residues 1–24 form a disordered region; it reads MANANGKAATSLPEKISAKANPEA. Lysine 687 is modified (N6-(pyridoxal phosphate)lysine).

The protein belongs to the glycogen phosphorylase family. Pyridoxal 5'-phosphate is required as a cofactor.

Its subcellular location is the cytoplasm. It carries out the reaction [(1-&gt;4)-alpha-D-glucosyl](n) + phosphate = [(1-&gt;4)-alpha-D-glucosyl](n-1) + alpha-D-glucose 1-phosphate. Its function is as follows. Phosphorylase is an important allosteric enzyme in carbohydrate metabolism. Enzymes from different sources differ in their regulatory mechanisms and in their natural substrates. However, all known phosphorylases share catalytic and structural properties. This is Alpha-glucan phosphorylase 2, cytosolic (PHS2) from Arabidopsis thaliana (Mouse-ear cress).